Reading from the N-terminus, the 580-residue chain is Potassium-transporting ATPase potassium-binding subunit (580 aa).

10 consecutive transmembrane segments (helical) span residues 3–23, 65–85, 136–156, 179–199, 263–283, 293–313, 399–419, 436–456, 504–524, and 546–566; these read ASGA…SVPL, DYAF…YALQ, GLGV…VALI, LYIL…QGVV, LSNF…CHTF, GWAV…ACVA, GLYG…LMVG, MASL…AIAV, AIGV…LALA, and LFVG…FVPA.

It belongs to the KdpA family. In terms of assembly, the system is composed of three essential subunits: KdpA, KdpB and KdpC.

The protein resides in the cell inner membrane. In terms of biological role, part of the high-affinity ATP-driven potassium transport (or Kdp) system, which catalyzes the hydrolysis of ATP coupled with the electrogenic transport of potassium into the cytoplasm. This subunit binds the periplasmic potassium ions and delivers the ions to the membrane domain of KdpB through an intramembrane tunnel. The protein is Potassium-transporting ATPase potassium-binding subunit of Sorangium cellulosum (strain So ce56) (Polyangium cellulosum (strain So ce56)).